An 804-amino-acid polypeptide reads, in one-letter code: Phenylalanine--tRNA ligase beta subunit (804 aa).

Positions G39–A147 constitute a tRNA-binding domain. Residues E402–V480 enclose the B5 domain. Residues D458, D464, E467, and E468 each contribute to the Mg(2+) site. One can recognise an FDX-ACB domain in the interval S711–R804.

Belongs to the phenylalanyl-tRNA synthetase beta subunit family. Type 1 subfamily. Tetramer of two alpha and two beta subunits. Mg(2+) is required as a cofactor.

It is found in the cytoplasm. It carries out the reaction tRNA(Phe) + L-phenylalanine + ATP = L-phenylalanyl-tRNA(Phe) + AMP + diphosphate + H(+). The polypeptide is Phenylalanine--tRNA ligase beta subunit (Syntrophus aciditrophicus (strain SB)).